The primary structure comprises 542 residues: 4-coumarate--CoA ligase-like 1 (542 aa).

The ATP site is built by Ser-189, Ser-190, Gly-191, Thr-192, Thr-193, and Lys-197. Tyr-237 serves as a coordination point for (E)-4-coumaroyl-AMP. Arg-258 is a binding site for CoA. The SBD1 stretch occupies residues 260 to 331 (DLRIFLNALI…AKFPNVQVQE (72 aa)). Ala-309, Glu-331, Ala-332, and Thr-336 together coordinate (E)-4-coumaroyl-AMP. The ATP site is built by Glu-331, Ala-332, Thr-336, Asp-420, and Arg-435. The tract at residues 332–399 (AYGLTEHSCI…VRSQCVMQGY (68 aa)) is SBD2. The (E)-4-coumaroyl-AMP site is built by Lys-437 and Lys-441. Residues Lys-443 and Gly-444 each contribute to the CoA site. Lys-526 contacts ATP.

The protein belongs to the ATP-dependent AMP-binding enzyme family. In terms of assembly, interacts with TKPR1, PKSA and PKSB. Mg(2+) serves as cofactor. As to expression, mostly confined to anther tapetal cells.

It localises to the endoplasmic reticulum. It catalyses the reaction (E)-4-coumarate + ATP + CoA = (E)-4-coumaroyl-CoA + AMP + diphosphate. It carries out the reaction (E)-4-coumarate + ATP + H(+) = (E)-4-coumaroyl-AMP + diphosphate. The catalysed reaction is (E)-4-coumaroyl-AMP + CoA = (E)-4-coumaroyl-CoA + AMP + H(+). Carboxylate--CoA ligase that may use 4-coumarate as substrate. Follows a two-step reaction mechanism, wherein the carboxylate substrate first undergoes adenylation by ATP, followed by a thioesterification in the presence of CoA to yield the final CoA thioester. The protein is 4-coumarate--CoA ligase-like 1 of Arabidopsis thaliana (Mouse-ear cress).